The following is a 227-amino-acid chain: MSFLKKSLLLVLFLGLVSHSVCKEEKRETEEENENEEENHEVGSEMKRYAFWYPNRDTEEKNENEEENQEEGSEMKRYAFGYPKREPEEENENEEENHEEGSEMKRYAFEVVGGEAKKMKREPEEENENEEENHEEGSEMKRYAFDVVGGEAKKMKREPEEENENEEENHEEGSEMKRYAFDVVGGEAKKMKREPEEENENEEENHEEGSEMKRYAFDVVGGEAKKM.

An N-terminal signal peptide occupies residues 1 to 20 (MSFLKKSLLLVLFLGLVSHS). The propeptide occupies 21–46 (VCKEEKRETEEENENEEENHEVGSEM). The interval 22 to 227 (CKEEKRETEE…DVVGGEAKKM (206 aa)) is disordered. Residues 30-39 (EEENENEEEN) are compositionally biased toward acidic residues. The residue at position 50 (Ala-50) is a D-alanine (Ala). Positions 57-75 (DTEEKNENEEENQEEGSEM) are excised as a propeptide. Acidic residues predominate over residues 62–72 (NENEEENQEEG). The segment covering 73–87 (SEMKRYAFGYPKREP) has biased composition (basic and acidic residues). Position 79 is a D-alanine (Ala) (Ala-79). A propeptide spanning residues 86 to 104 (EPEEENENEEENHEEGSEM) is cleaved from the precursor. The segment covering 88 to 98 (EEENENEEENH) has biased composition (acidic residues). Residues 99-108 (EEGSEMKRYA) show a composition bias toward basic and acidic residues. Residue Ala-108 is modified to D-alanine (Ala). Residue Gly-113 is modified to Glycine amide. A propeptide spanning residues 115-140 (EAKKMKREPEEENENEEENHEEGSEM) is cleaved from the precursor. Over residues 124–134 (EEENENEEENH) the composition is skewed to acidic residues. The segment covering 135–144 (EEGSEMKRYA) has biased composition (basic and acidic residues). Residue Ala-144 is modified to D-alanine (Ala). Gly-149 is subject to Glycine amide. The propeptide occupies 151–176 (EAKKMKREPEEENENEEENHEEGSEM). The segment covering 160-170 (EEENENEEENH) has biased composition (acidic residues). A compositionally biased stretch (basic and acidic residues) spans 171-180 (EEGSEMKRYA). Ala-180 carries the D-alanine (Ala) modification. The residue at position 185 (Gly-185) is a Glycine amide. The propeptide occupies 187 to 212 (EAKKMKREPEEENENEEENHEEGSEM). Acidic residues predominate over residues 196–206 (EEENENEEENH). Residues 207-216 (EEGSEMKRYA) are compositionally biased toward basic and acidic residues. Ala-216 carries the D-alanine (Ala) modification. Gly-221 carries the post-translational modification Glycine amide. The propeptide occupies 223-227 (EAKKM).

The protein belongs to the frog skin active peptide (FSAP) family. Dermorphin subfamily. As to expression, expressed by the skin glands.

The protein localises to the secreted. Functionally, deltorphin is a heptapeptide with a very potent opiate-like activity. Has high affinity and selectivity for delta-type opioid receptors. The two dermorphin-like peptides have a similar affinity and selectivity for the mu opioid receptor as dermorphin. This chain is [D-Ala2]-deltorphins, found in Phyllomedusa bicolor (Two-colored leaf frog).